Reading from the N-terminus, the 229-residue chain is 2-C-methyl-D-erythritol 4-phosphate cytidylyltransferase (229 aa).

Belongs to the IspD/TarI cytidylyltransferase family. IspD subfamily.

It carries out the reaction 2-C-methyl-D-erythritol 4-phosphate + CTP + H(+) = 4-CDP-2-C-methyl-D-erythritol + diphosphate. The protein operates within isoprenoid biosynthesis; isopentenyl diphosphate biosynthesis via DXP pathway; isopentenyl diphosphate from 1-deoxy-D-xylulose 5-phosphate: step 2/6. Its function is as follows. Catalyzes the formation of 4-diphosphocytidyl-2-C-methyl-D-erythritol from CTP and 2-C-methyl-D-erythritol 4-phosphate (MEP). This is 2-C-methyl-D-erythritol 4-phosphate cytidylyltransferase from Shouchella clausii (strain KSM-K16) (Alkalihalobacillus clausii).